Here is a 405-residue protein sequence, read N- to C-terminus: MADVNKVVLAYSGGLDTSVILKWLQDTYNCEVVTFTADLGQGEEVEPARAKAQAMGVKEIYIDDLREEFVRDFVFPMFRANTVYEGEYLLGTSIARPLIAKRLIEIANETGADAISHGATGKGNDQVRFELGAYALKPGVKVIAPWREWDLLSREKLMDYAEKHAIPIERHGKKKSPYSMDANLLHISYEGGVLEDTWTEHEEDMWKWTVSPENAPDKPQYLELTYRNGDIVALDGVEMTPATVLATLNRIGGEHGIGRLDIVENRYVGMKSRGCYETPGGTIMLRAHRAIESITLDREVAHLKDELMPKYASLIYTGYWWSPERLMLQQMIDASQAHVNGVVRLKLYKGNVIVTGRKSDDSLFDANIATFEEDGGAYNQADAAGFIKLNALRMRIAANKGRSLF.

Residues 10 to 18 (AYSGGLDTS) and alanine 37 contribute to the ATP site. Positions 88 and 93 each coordinate L-citrulline. Glycine 118 lines the ATP pocket. The L-aspartate site is built by threonine 120, asparagine 124, and aspartate 125. Asparagine 124 is a binding site for L-citrulline. Arginine 128, serine 179, serine 188, glutamate 264, and tyrosine 276 together coordinate L-citrulline.

Belongs to the argininosuccinate synthase family. Type 1 subfamily. Homotetramer.

Its subcellular location is the cytoplasm. The catalysed reaction is L-citrulline + L-aspartate + ATP = 2-(N(omega)-L-arginino)succinate + AMP + diphosphate + H(+). Its pathway is amino-acid biosynthesis; L-arginine biosynthesis; L-arginine from L-ornithine and carbamoyl phosphate: step 2/3. The sequence is that of Argininosuccinate synthase from Pseudomonas fluorescens (strain SBW25).